Here is a 229-residue protein sequence, read N- to C-terminus: ATP synthase subunit a (229 aa).

Helical transmembrane passes span A25–A45, F82–I102, G104–V124, F142–L162, L181–M201, and G202–Q222.

This sequence belongs to the ATPase A chain family. F-type ATPases have 2 components, CF(1) - the catalytic core - and CF(0) - the membrane proton channel. CF(1) has five subunits: alpha(3), beta(3), gamma(1), delta(1), epsilon(1). CF(0) has three main subunits: a(1), b(2) and c(9-12). The alpha and beta chains form an alternating ring which encloses part of the gamma chain. CF(1) is attached to CF(0) by a central stalk formed by the gamma and epsilon chains, while a peripheral stalk is formed by the delta and b chains.

Its subcellular location is the cell inner membrane. Key component of the proton channel; it plays a direct role in the translocation of protons across the membrane. This Geobacter sp. (strain M21) protein is ATP synthase subunit a.